The sequence spans 427 residues: 4-hydroxy-3-methylbut-2-en-1-yl diphosphate synthase (flavodoxin) (427 aa).

The [4Fe-4S] cluster site is built by Cys300, Cys303, Cys346, and Glu353.

Belongs to the IspG family. Requires [4Fe-4S] cluster as cofactor.

The catalysed reaction is (2E)-4-hydroxy-3-methylbut-2-enyl diphosphate + oxidized [flavodoxin] + H2O + 2 H(+) = 2-C-methyl-D-erythritol 2,4-cyclic diphosphate + reduced [flavodoxin]. Its pathway is isoprenoid biosynthesis; isopentenyl diphosphate biosynthesis via DXP pathway; isopentenyl diphosphate from 1-deoxy-D-xylulose 5-phosphate: step 5/6. Functionally, converts 2C-methyl-D-erythritol 2,4-cyclodiphosphate (ME-2,4cPP) into 1-hydroxy-2-methyl-2-(E)-butenyl 4-diphosphate. This is 4-hydroxy-3-methylbut-2-en-1-yl diphosphate synthase (flavodoxin) from Chromobacterium violaceum (strain ATCC 12472 / DSM 30191 / JCM 1249 / CCUG 213 / NBRC 12614 / NCIMB 9131 / NCTC 9757 / MK).